The primary structure comprises 344 residues: Succinylglutamate desuccinylase (344 aa).

His63, Glu66, and His160 together coordinate Zn(2+). Residue Glu224 is part of the active site.

Belongs to the AspA/AstE family. Succinylglutamate desuccinylase subfamily. It depends on Zn(2+) as a cofactor.

It carries out the reaction N-succinyl-L-glutamate + H2O = L-glutamate + succinate. Its pathway is amino-acid degradation; L-arginine degradation via AST pathway; L-glutamate and succinate from L-arginine: step 5/5. In terms of biological role, transforms N(2)-succinylglutamate into succinate and glutamate. The sequence is that of Succinylglutamate desuccinylase from Shewanella sp. (strain W3-18-1).